The chain runs to 275 residues: Trans-aconitate 2-methyltransferase (275 aa).

This sequence belongs to the methyltransferase superfamily. Tam family.

Its subcellular location is the cytoplasm. It catalyses the reaction trans-aconitate + S-adenosyl-L-methionine = (E)-3-(methoxycarbonyl)pent-2-enedioate + S-adenosyl-L-homocysteine. Functionally, catalyzes the S-adenosylmethionine monomethyl esterification of trans-aconitate. The protein is Trans-aconitate 2-methyltransferase of Pseudomonas paraeruginosa (strain DSM 24068 / PA7) (Pseudomonas aeruginosa (strain PA7)).